A 1102-amino-acid chain; its full sequence is Probable ubiquitin-conjugating enzyme E2 23 (1102 aa).

Disordered stretches follow at residues 1–20 (MEHE…DSSV), 25–111 (ASLS…DGNY), 396–418 (LPKV…PVHE), 579–602 (SPGN…SHQE), 661–710 (DESV…DIYA), and 760–800 (QAES…KNIL). Residues 31–44 (DSEHPNIYRQDIVK) are compositionally biased toward basic and acidic residues. Residues 59 to 88 (GDSDSDSDISDEEEDDDDDEDNDDDDEDVE) show a composition bias toward acidic residues. Over residues 579–596 (SPGNSFEEATQQDNGYQD) the composition is skewed to polar residues. Residues 779–800 (SKVNVTDNCESKGTQANAKNIL) are compositionally biased toward polar residues. Residues 850-1010 (QWFKKVDQDW…TFLLNCKTMM (161 aa)) form the UBC core domain. Cysteine 936 functions as the Glycyl thioester intermediate in the catalytic mechanism.

This sequence belongs to the ubiquitin-conjugating enzyme family.

The catalysed reaction is S-ubiquitinyl-[E1 ubiquitin-activating enzyme]-L-cysteine + [E2 ubiquitin-conjugating enzyme]-L-cysteine = [E1 ubiquitin-activating enzyme]-L-cysteine + S-ubiquitinyl-[E2 ubiquitin-conjugating enzyme]-L-cysteine.. It participates in protein modification; protein ubiquitination. Its function is as follows. Accepts the ubiquitin from the E1 complex and catalyzes its covalent attachment to other proteins. This chain is Probable ubiquitin-conjugating enzyme E2 23 (UBC23), found in Arabidopsis thaliana (Mouse-ear cress).